Reading from the N-terminus, the 467-residue chain is Uronate isomerase (467 aa).

Belongs to the metallo-dependent hydrolases superfamily. Uronate isomerase family.

It catalyses the reaction D-glucuronate = D-fructuronate. The catalysed reaction is aldehydo-D-galacturonate = keto-D-tagaturonate. It participates in carbohydrate metabolism; pentose and glucuronate interconversion. The chain is Uronate isomerase from Geobacillus thermodenitrificans (strain NG80-2).